Consider the following 77-residue polypeptide: uncharacterized protein (77 aa).

4Fe-4S ferredoxin-type domains lie at 3–32 (VEII…WTKD) and 36–65 (KYYA…IKVV). [4Fe-4S] cluster is bound by residues Cys-12, Cys-15, Cys-18, Cys-22, Cys-45, Cys-48, Cys-51, and Cys-55.

Requires [4Fe-4S] cluster as cofactor.

Functionally, ferredoxins are iron-sulfur proteins that transfer electrons probably in the CO-dehydrogenase complex. This is an uncharacterized protein from Methanocaldococcus jannaschii (strain ATCC 43067 / DSM 2661 / JAL-1 / JCM 10045 / NBRC 100440) (Methanococcus jannaschii).